Here is a 405-residue protein sequence, read N- to C-terminus: Cysteine desulfurase IscS (405 aa).

Pyridoxal 5'-phosphate contacts are provided by residues 75 to 76 (AT), Asn156, Gln184, and 204 to 206 (SAH). Lys207 bears the N6-(pyridoxal phosphate)lysine mark. Thr244 is a pyridoxal 5'-phosphate binding site. Cys329 serves as the catalytic Cysteine persulfide intermediate. A [2Fe-2S] cluster-binding site is contributed by Cys329.

The protein belongs to the class-V pyridoxal-phosphate-dependent aminotransferase family. NifS/IscS subfamily. In terms of assembly, homodimer. Forms a heterotetramer with IscU, interacts with other sulfur acceptors. The cofactor is pyridoxal 5'-phosphate.

It is found in the cytoplasm. It catalyses the reaction (sulfur carrier)-H + L-cysteine = (sulfur carrier)-SH + L-alanine. Its pathway is cofactor biosynthesis; iron-sulfur cluster biosynthesis. In terms of biological role, master enzyme that delivers sulfur to a number of partners involved in Fe-S cluster assembly, tRNA modification or cofactor biosynthesis. Catalyzes the removal of elemental sulfur atoms from cysteine to produce alanine. Functions as a sulfur delivery protein for Fe-S cluster synthesis onto IscU, an Fe-S scaffold assembly protein, as well as other S acceptor proteins. The protein is Cysteine desulfurase IscS of Acinetobacter baumannii (strain SDF).